Consider the following 507-residue polypeptide: Glycerol kinase (507 aa).

Residue threonine 15 participates in ADP binding. 3 residues coordinate ATP: threonine 15, threonine 16, and serine 17. Threonine 15 is a binding site for sn-glycerol 3-phosphate. ADP is bound at residue arginine 19. Arginine 85, glutamate 86, tyrosine 137, and aspartate 250 together coordinate sn-glycerol 3-phosphate. Residues arginine 85, glutamate 86, tyrosine 137, aspartate 250, and glutamine 251 each coordinate glycerol. Residues threonine 272, glycine 316, and glycine 418 each coordinate ADP. Residues threonine 272, glycine 316, and glycine 418 each contribute to the ATP site.

This sequence belongs to the FGGY kinase family.

The enzyme catalyses glycerol + ATP = sn-glycerol 3-phosphate + ADP + H(+). The protein operates within polyol metabolism; glycerol degradation via glycerol kinase pathway; sn-glycerol 3-phosphate from glycerol: step 1/1. Inhibited by fructose 1,6-bisphosphate (FBP). Its function is as follows. Key enzyme in the regulation of glycerol uptake and metabolism. Catalyzes the phosphorylation of glycerol to yield sn-glycerol 3-phosphate. This Malacoplasma penetrans (strain HF-2) (Mycoplasma penetrans) protein is Glycerol kinase.